The primary structure comprises 61 residues: Large ribosomal subunit protein uL30 (61 aa).

It belongs to the universal ribosomal protein uL30 family. Part of the 50S ribosomal subunit.

The sequence is that of Large ribosomal subunit protein uL30 from Marinomonas sp. (strain MWYL1).